The chain runs to 257 residues: Imidazole glycerol phosphate synthase subunit HisF (257 aa).

Catalysis depends on residues D11 and D130.

Belongs to the HisA/HisF family. In terms of assembly, heterodimer of HisH and HisF.

It localises to the cytoplasm. The catalysed reaction is 5-[(5-phospho-1-deoxy-D-ribulos-1-ylimino)methylamino]-1-(5-phospho-beta-D-ribosyl)imidazole-4-carboxamide + L-glutamine = D-erythro-1-(imidazol-4-yl)glycerol 3-phosphate + 5-amino-1-(5-phospho-beta-D-ribosyl)imidazole-4-carboxamide + L-glutamate + H(+). It functions in the pathway amino-acid biosynthesis; L-histidine biosynthesis; L-histidine from 5-phospho-alpha-D-ribose 1-diphosphate: step 5/9. In terms of biological role, IGPS catalyzes the conversion of PRFAR and glutamine to IGP, AICAR and glutamate. The HisF subunit catalyzes the cyclization activity that produces IGP and AICAR from PRFAR using the ammonia provided by the HisH subunit. In Aliivibrio salmonicida (strain LFI1238) (Vibrio salmonicida (strain LFI1238)), this protein is Imidazole glycerol phosphate synthase subunit HisF.